We begin with the raw amino-acid sequence, 189 residues long: Pyridoxal 5'-phosphate synthase subunit PdxT (189 aa).

Position 47–49 (47–49 (GES)) interacts with L-glutamine. Cysteine 79 serves as the catalytic Nucleophile. Residues arginine 106 and 135–136 (IR) each bind L-glutamine. Active-site charge relay system residues include histidine 171 and glutamate 173.

Belongs to the glutaminase PdxT/SNO family. In terms of assembly, in the presence of PdxS, forms a dodecamer of heterodimers. Only shows activity in the heterodimer.

The catalysed reaction is aldehydo-D-ribose 5-phosphate + D-glyceraldehyde 3-phosphate + L-glutamine = pyridoxal 5'-phosphate + L-glutamate + phosphate + 3 H2O + H(+). It catalyses the reaction L-glutamine + H2O = L-glutamate + NH4(+). It functions in the pathway cofactor biosynthesis; pyridoxal 5'-phosphate biosynthesis. Catalyzes the hydrolysis of glutamine to glutamate and ammonia as part of the biosynthesis of pyridoxal 5'-phosphate. The resulting ammonia molecule is channeled to the active site of PdxS. The chain is Pyridoxal 5'-phosphate synthase subunit PdxT from Caldanaerobacter subterraneus subsp. tengcongensis (strain DSM 15242 / JCM 11007 / NBRC 100824 / MB4) (Thermoanaerobacter tengcongensis).